A 232-amino-acid polypeptide reads, in one-letter code: Large ribosomal subunit protein uL1 (232 aa).

It belongs to the universal ribosomal protein uL1 family. As to quaternary structure, part of the 50S ribosomal subunit.

Its function is as follows. Binds directly to 23S rRNA. The L1 stalk is quite mobile in the ribosome, and is involved in E site tRNA release. Protein L1 is also a translational repressor protein, it controls the translation of the L11 operon by binding to its mRNA. The protein is Large ribosomal subunit protein uL1 of Bordetella bronchiseptica (strain ATCC BAA-588 / NCTC 13252 / RB50) (Alcaligenes bronchisepticus).